A 452-amino-acid chain; its full sequence is Phosphoglucosamine mutase (452 aa).

Catalysis depends on Ser108, which acts as the Phosphoserine intermediate. Mg(2+)-binding residues include Ser108, Asp247, Asp249, and Asp251. A Phosphoserine modification is found at Ser108.

Belongs to the phosphohexose mutase family. Mg(2+) serves as cofactor. Activated by phosphorylation.

The enzyme catalyses alpha-D-glucosamine 1-phosphate = D-glucosamine 6-phosphate. Catalyzes the conversion of glucosamine-6-phosphate to glucosamine-1-phosphate. The protein is Phosphoglucosamine mutase of Burkholderia thailandensis (strain ATCC 700388 / DSM 13276 / CCUG 48851 / CIP 106301 / E264).